A 276-amino-acid polypeptide reads, in one-letter code: Type II pantothenate kinase (276 aa).

8 to 15 (DAGGTLTK) contributes to the ATP binding site. The active-site Proton acceptor is the Glu-76. ATP-binding positions include Thr-105, 127–131 (GGTIM), Phe-143, and Ser-230.

It belongs to the type II pantothenate kinase family. As to quaternary structure, homodimer.

It localises to the cytoplasm. It catalyses the reaction (R)-pantothenate + ATP = (R)-4'-phosphopantothenate + ADP + H(+). The protein operates within cofactor biosynthesis; coenzyme A biosynthesis; CoA from (R)-pantothenate: step 1/5. Functionally, catalyzes the phosphorylation of pantothenate (Pan), the first step in CoA biosynthesis. The protein is Type II pantothenate kinase of Bacillus thuringiensis subsp. konkukian (strain 97-27).